The chain runs to 122 residues: Large ribosomal subunit protein bL12 (122 aa).

It belongs to the bacterial ribosomal protein bL12 family. Homodimer. Part of the ribosomal stalk of the 50S ribosomal subunit. Forms a multimeric L10(L12)X complex, where L10 forms an elongated spine to which 2 to 4 L12 dimers bind in a sequential fashion. Binds GTP-bound translation factors.

Functionally, forms part of the ribosomal stalk which helps the ribosome interact with GTP-bound translation factors. Is thus essential for accurate translation. The chain is Large ribosomal subunit protein bL12 from Staphylococcus aureus (strain Newman).